A 233-amino-acid chain; its full sequence is MLVPIPALNDNYIWLYGRANLPIIVIDIPEFTPLLDYVQQHQLNVEALLLTHHHDDHTAGVSLFKQHFPNVKVFGPAETQAKGATEIVNMGILQTEHYHIHVLQTAGHTEQHVSYLVDGHLFCGDSLFSAGCGRVFTGNYQHMFDGLQRLKSLPDDTIVCPAHEYTLANLAFAKYILPENVAIQQHEQWVQKQRVTHQPSLPTTMGREKQINPFLIAQDMETFVAWRKAKDVF.

Residues histidine 52, histidine 54, aspartate 56, histidine 57, histidine 108, aspartate 125, and histidine 163 each coordinate Zn(2+).

Belongs to the metallo-beta-lactamase superfamily. Glyoxalase II family. In terms of assembly, monomer. Zn(2+) is required as a cofactor.

The catalysed reaction is an S-(2-hydroxyacyl)glutathione + H2O = a 2-hydroxy carboxylate + glutathione + H(+). Its pathway is secondary metabolite metabolism; methylglyoxal degradation; (R)-lactate from methylglyoxal: step 2/2. Thiolesterase that catalyzes the hydrolysis of S-D-lactoyl-glutathione to form glutathione and D-lactic acid. This chain is Hydroxyacylglutathione hydrolase, found in Pasteurella multocida (strain Pm70).